Reading from the N-terminus, the 301-residue chain is tRNA pseudouridine synthase B (301 aa).

Asp-45 acts as the Nucleophile in catalysis.

It belongs to the pseudouridine synthase TruB family. Type 1 subfamily.

It catalyses the reaction uridine(55) in tRNA = pseudouridine(55) in tRNA. Functionally, responsible for synthesis of pseudouridine from uracil-55 in the psi GC loop of transfer RNAs. This Streptomyces coelicolor (strain ATCC BAA-471 / A3(2) / M145) protein is tRNA pseudouridine synthase B.